The chain runs to 244 residues: 5-oxoprolinase subunit A (244 aa).

Belongs to the LamB/PxpA family. As to quaternary structure, forms a complex composed of PxpA, PxpB and PxpC.

The catalysed reaction is 5-oxo-L-proline + ATP + 2 H2O = L-glutamate + ADP + phosphate + H(+). Its function is as follows. Catalyzes the cleavage of 5-oxoproline to form L-glutamate coupled to the hydrolysis of ATP to ADP and inorganic phosphate. In Escherichia coli O7:K1 (strain IAI39 / ExPEC), this protein is 5-oxoprolinase subunit A.